The primary structure comprises 60 residues: Cytochrome c oxidase subunit 9, mitochondrial (60 aa).

Topologically, residues M1–D18 are mitochondrial matrix. The chain crosses the membrane as a helical span at residues I19–F37. Residues H38–A57 lie on the Mitochondrial intermembrane side of the membrane. Positions A58–E60 are cleaved as a propeptide — removed in mature form.

Belongs to the fungal cytochrome c oxidase subunit 7a family. As to quaternary structure, component of the cytochrome c oxidase (complex IV, CIV), a multisubunit enzyme composed of a catalytic core of 3 subunits and several supernumerary subunits. The complex exists as a monomer or a dimer and forms supercomplexes (SCs) in the inner mitochondrial membrane with ubiquinol-cytochrome c oxidoreductase (cytochrome b-c1 complex, complex III, CIII).

Its subcellular location is the mitochondrion inner membrane. It participates in energy metabolism; oxidative phosphorylation. In terms of biological role, component of the cytochrome c oxidase, the last enzyme in the mitochondrial electron transport chain which drives oxidative phosphorylation. The respiratory chain contains 3 multisubunit complexes succinate dehydrogenase (complex II, CII), ubiquinol-cytochrome c oxidoreductase (cytochrome b-c1 complex, complex III, CIII) and cytochrome c oxidase (complex IV, CIV), that cooperate to transfer electrons derived from NADH and succinate to molecular oxygen, creating an electrochemical gradient over the inner membrane that drives transmembrane transport and the ATP synthase. Cytochrome c oxidase is the component of the respiratory chain that catalyzes the reduction of oxygen to water. Electrons originating from reduced cytochrome c in the intermembrane space (IMS) are transferred via the dinuclear copper A center (CU(A)) of subunit 2 and heme A of subunit 1 to the active site in subunit 1, a binuclear center (BNC) formed by heme A3 and copper B (CU(B)). The BNC reduces molecular oxygen to 2 water molecules using 4 electrons from cytochrome c in the IMS and 4 protons from the mitochondrial matrix. This chain is Cytochrome c oxidase subunit 9, mitochondrial (COX9), found in Eremothecium gossypii (strain ATCC 10895 / CBS 109.51 / FGSC 9923 / NRRL Y-1056) (Yeast).